The chain runs to 1286 residues: DNA-directed RNA polymerase subunit beta' (1286 aa).

4 residues coordinate Zn(2+): cysteine 58, cysteine 60, cysteine 73, and cysteine 76. Mg(2+) is bound by residues aspartate 533, aspartate 535, and aspartate 537. Positions 867, 944, 951, and 954 each coordinate Zn(2+).

The protein belongs to the RNA polymerase beta' chain family. In terms of assembly, the RNAP catalytic core consists of 2 alpha, 1 beta, 1 beta' and 1 omega subunit. When a sigma factor is associated with the core the holoenzyme is formed, which can initiate transcription. Mg(2+) is required as a cofactor. Requires Zn(2+) as cofactor.

The catalysed reaction is RNA(n) + a ribonucleoside 5'-triphosphate = RNA(n+1) + diphosphate. Its function is as follows. DNA-dependent RNA polymerase catalyzes the transcription of DNA into RNA using the four ribonucleoside triphosphates as substrates. The polypeptide is DNA-directed RNA polymerase subunit beta' (Tropheryma whipplei (strain TW08/27) (Whipple's bacillus)).